The primary structure comprises 437 residues: 3-ketoacyl-CoA thiolase (437 aa).

The active-site Acyl-thioester intermediate is Cys-99. Residues His-392 and Cys-422 each act as proton acceptor in the active site.

The protein belongs to the thiolase-like superfamily. Thiolase family. Heterotetramer of two alpha chains (FadJ) and two beta chains (FadI).

Its subcellular location is the cytoplasm. It carries out the reaction an acyl-CoA + acetyl-CoA = a 3-oxoacyl-CoA + CoA. Its pathway is lipid metabolism; fatty acid beta-oxidation. In terms of biological role, catalyzes the final step of fatty acid oxidation in which acetyl-CoA is released and the CoA ester of a fatty acid two carbons shorter is formed. The chain is 3-ketoacyl-CoA thiolase from Pectobacterium carotovorum subsp. carotovorum (strain PC1).